A 445-amino-acid chain; its full sequence is Tubulin beta-5 chain (445 aa).

Positions 11, 69, 138, 142, 143, 144, 204, and 226 each coordinate GTP. Residue E69 coordinates Mg(2+). Positions 420-445 are disordered; it reads AEYQQYQDATADDEYEEGEEEEEEAA. Residues 429-445 are compositionally biased toward acidic residues; it reads TADDEYEEGEEEEEEAA.

The protein belongs to the tubulin family. As to quaternary structure, dimer of alpha and beta chains. A typical microtubule is a hollow water-filled tube with an outer diameter of 25 nm and an inner diameter of 15 nM. Alpha-beta heterodimers associate head-to-tail to form protofilaments running lengthwise along the microtubule wall with the beta-tubulin subunit facing the microtubule plus end conferring a structural polarity. Microtubules usually have 13 protofilaments but different protofilament numbers can be found in some organisms and specialized cells. Mg(2+) serves as cofactor.

Its subcellular location is the cytoplasm. It is found in the cytoskeleton. Functionally, tubulin is the major constituent of microtubules, a cylinder consisting of laterally associated linear protofilaments composed of alpha- and beta-tubulin heterodimers. Microtubules grow by the addition of GTP-tubulin dimers to the microtubule end, where a stabilizing cap forms. Below the cap, tubulin dimers are in GDP-bound state, owing to GTPase activity of alpha-tubulin. This Gossypium hirsutum (Upland cotton) protein is Tubulin beta-5 chain.